We begin with the raw amino-acid sequence, 189 residues long: UPF0301 protein HRM2_24640 (189 aa).

Belongs to the UPF0301 (AlgH) family.

This chain is UPF0301 protein HRM2_24640, found in Desulforapulum autotrophicum (strain ATCC 43914 / DSM 3382 / VKM B-1955 / HRM2) (Desulfobacterium autotrophicum).